Reading from the N-terminus, the 422-residue chain is Serine--tRNA ligase (422 aa).

L-serine is bound at residue 229 to 231; the sequence is TAE. An ATP-binding site is contributed by 258–260; that stretch reads RRE. Glu-281 provides a ligand contact to L-serine. 345 to 348 lines the ATP pocket; that stretch reads EISS. An L-serine-binding site is contributed by Ser-379.

This sequence belongs to the class-II aminoacyl-tRNA synthetase family. Type-1 seryl-tRNA synthetase subfamily. In terms of assembly, homodimer. The tRNA molecule binds across the dimer.

The protein resides in the cytoplasm. It carries out the reaction tRNA(Ser) + L-serine + ATP = L-seryl-tRNA(Ser) + AMP + diphosphate + H(+). The catalysed reaction is tRNA(Sec) + L-serine + ATP = L-seryl-tRNA(Sec) + AMP + diphosphate + H(+). It participates in aminoacyl-tRNA biosynthesis; selenocysteinyl-tRNA(Sec) biosynthesis; L-seryl-tRNA(Sec) from L-serine and tRNA(Sec): step 1/1. Catalyzes the attachment of serine to tRNA(Ser). Is also able to aminoacylate tRNA(Sec) with serine, to form the misacylated tRNA L-seryl-tRNA(Sec), which will be further converted into selenocysteinyl-tRNA(Sec). This chain is Serine--tRNA ligase, found in Methanosarcina mazei (strain ATCC BAA-159 / DSM 3647 / Goe1 / Go1 / JCM 11833 / OCM 88) (Methanosarcina frisia).